The sequence spans 570 residues: Proline--tRNA ligase (570 aa).

The protein belongs to the class-II aminoacyl-tRNA synthetase family. ProS type 1 subfamily. In terms of assembly, homodimer.

The protein localises to the cytoplasm. It catalyses the reaction tRNA(Pro) + L-proline + ATP = L-prolyl-tRNA(Pro) + AMP + diphosphate. Its function is as follows. Catalyzes the attachment of proline to tRNA(Pro) in a two-step reaction: proline is first activated by ATP to form Pro-AMP and then transferred to the acceptor end of tRNA(Pro). As ProRS can inadvertently accommodate and process non-cognate amino acids such as alanine and cysteine, to avoid such errors it has two additional distinct editing activities against alanine. One activity is designated as 'pretransfer' editing and involves the tRNA(Pro)-independent hydrolysis of activated Ala-AMP. The other activity is designated 'posttransfer' editing and involves deacylation of mischarged Ala-tRNA(Pro). The misacylated Cys-tRNA(Pro) is not edited by ProRS. The sequence is that of Proline--tRNA ligase from Desulfotalea psychrophila (strain LSv54 / DSM 12343).